A 186-amino-acid chain; its full sequence is Ribosome-recycling factor (186 aa).

It belongs to the RRF family.

Its subcellular location is the cytoplasm. In terms of biological role, responsible for the release of ribosomes from messenger RNA at the termination of protein biosynthesis. May increase the efficiency of translation by recycling ribosomes from one round of translation to another. This is Ribosome-recycling factor from Ralstonia nicotianae (strain ATCC BAA-1114 / GMI1000) (Ralstonia solanacearum).